Here is a 430-residue protein sequence, read N- to C-terminus: Probable FAD-dependent monooxygenase (430 aa).

The first 23 residues, 1–23 (MGSTSTPPHVLIIGAGITGLALA), serve as a signal peptide directing secretion. 9 to 37 (HVLIIGAGITGLALAQALRKHGVSFAVYE) provides a ligand contact to FAD. 2 N-linked (GlcNAc...) asparagine glycosylation sites follow: asparagine 130 and asparagine 151. Residue 307–330 (LEDWPTPPKGSWSNLGGTATLVGD) coordinates FAD.

The cofactor is FAD.

In Arthroderma benhamiae (strain ATCC MYA-4681 / CBS 112371) (Trichophyton mentagrophytes), this protein is Probable FAD-dependent monooxygenase.